A 210-amino-acid chain; its full sequence is Thymidylate kinase (210 aa).

10 to 17 (GPDGAGKT) provides a ligand contact to ATP.

Belongs to the thymidylate kinase family.

It catalyses the reaction dTMP + ATP = dTDP + ADP. In terms of biological role, phosphorylation of dTMP to form dTDP in both de novo and salvage pathways of dTTP synthesis. This is Thymidylate kinase from Geobacillus sp. (strain WCH70).